The sequence spans 259 residues: MILVLDVGNTNIVLGVYDDRELISVWRLSTDSKRTADEYGVQVIDLFLQSKLKPEDITGSIISSVVPTIMYSLEHMIIKYFQVSPIIVGPGVKTGINVKYDNPREVGADRIVNAVAAHEIYNRSLIIIDFGTATTFCAVTSAGDYLGGAICPGIKISSSALFEMAAKLPRVEIIRPQNIIGKNTVSSMQSGIVYGYIGQVDYIVKKMKMEMMDLGEEEPLVIATGGLAKLINEGTKSIDIIDSVLTLTGLRLIYEKNKE.

Aspartate 6–valine 13 is a binding site for ATP. Substrate-binding positions include tyrosine 100 and glycine 107–arginine 110. Aspartate 109 acts as the Proton acceptor in catalysis. Aspartate 129 is a K(+) binding site. Threonine 132 contacts ATP. Position 184 (threonine 184) interacts with substrate.

This sequence belongs to the type III pantothenate kinase family. As to quaternary structure, homodimer. It depends on NH4(+) as a cofactor. K(+) serves as cofactor.

The protein localises to the cytoplasm. The enzyme catalyses (R)-pantothenate + ATP = (R)-4'-phosphopantothenate + ADP + H(+). It functions in the pathway cofactor biosynthesis; coenzyme A biosynthesis; CoA from (R)-pantothenate: step 1/5. Its function is as follows. Catalyzes the phosphorylation of pantothenate (Pan), the first step in CoA biosynthesis. In Clostridium kluyveri (strain NBRC 12016), this protein is Type III pantothenate kinase.